The chain runs to 273 residues: 4-hydroxy-tetrahydrodipicolinate reductase (273 aa).

NAD(+) is bound by residues 12–17 (GAGGRM) and E38. Position 39 (R39) interacts with NADP(+). Residues 102 to 104 (GTT) and 126 to 129 (AANF) contribute to the NAD(+) site. H159 serves as the catalytic Proton donor/acceptor. H160 lines the (S)-2,3,4,5-tetrahydrodipicolinate pocket. K163 (proton donor) is an active-site residue. 169-170 (GT) contacts (S)-2,3,4,5-tetrahydrodipicolinate.

Belongs to the DapB family. In terms of assembly, homotetramer.

It is found in the cytoplasm. It carries out the reaction (S)-2,3,4,5-tetrahydrodipicolinate + NAD(+) + H2O = (2S,4S)-4-hydroxy-2,3,4,5-tetrahydrodipicolinate + NADH + H(+). The catalysed reaction is (S)-2,3,4,5-tetrahydrodipicolinate + NADP(+) + H2O = (2S,4S)-4-hydroxy-2,3,4,5-tetrahydrodipicolinate + NADPH + H(+). Its pathway is amino-acid biosynthesis; L-lysine biosynthesis via DAP pathway; (S)-tetrahydrodipicolinate from L-aspartate: step 4/4. Its function is as follows. Catalyzes the conversion of 4-hydroxy-tetrahydrodipicolinate (HTPA) to tetrahydrodipicolinate. This is 4-hydroxy-tetrahydrodipicolinate reductase from Salmonella arizonae (strain ATCC BAA-731 / CDC346-86 / RSK2980).